A 386-amino-acid polypeptide reads, in one-letter code: S-adenosylmethionine synthase (386 aa).

Histidine 14 contributes to the ATP binding site. Mg(2+) is bound at residue aspartate 16. A K(+)-binding site is contributed by glutamate 42. 2 residues coordinate L-methionine: glutamate 55 and glutamine 101. Residues glutamine 101–glutamate 111 form a flexible loop region. ATP-binding positions include aspartate 166 to lysine 168, arginine 233 to phenylalanine 234, aspartate 242, arginine 248 to lysine 249, alanine 265, and lysine 269. L-methionine is bound at residue aspartate 242. Lysine 273 contacts L-methionine.

This sequence belongs to the AdoMet synthase family. In terms of assembly, homotetramer; dimer of dimers. Mg(2+) serves as cofactor. Requires K(+) as cofactor.

The protein localises to the cytoplasm. It catalyses the reaction L-methionine + ATP + H2O = S-adenosyl-L-methionine + phosphate + diphosphate. The protein operates within amino-acid biosynthesis; S-adenosyl-L-methionine biosynthesis; S-adenosyl-L-methionine from L-methionine: step 1/1. Its function is as follows. Catalyzes the formation of S-adenosylmethionine (AdoMet) from methionine and ATP. The overall synthetic reaction is composed of two sequential steps, AdoMet formation and the subsequent tripolyphosphate hydrolysis which occurs prior to release of AdoMet from the enzyme. The protein is S-adenosylmethionine synthase of Acholeplasma laidlawii (strain PG-8A).